Here is a 1091-residue protein sequence, read N- to C-terminus: ATP-dependent helicase/deoxyribonuclease subunit B (1091 aa).

It belongs to the helicase family. AddB/RexB type 2 subfamily. Heterodimer of AddA and RexB. It depends on Mg(2+) as a cofactor.

Its function is as follows. The heterodimer acts as both an ATP-dependent DNA helicase and an ATP-dependent, dual-direction single-stranded exonuclease. Recognizes the chi site generating a DNA molecule suitable for the initiation of homologous recombination. This subunit has 5' -&gt; 3' nuclease activity but not helicase activity. The sequence is that of ATP-dependent helicase/deoxyribonuclease subunit B from Streptococcus pneumoniae serotype 19F (strain G54).